The following is a 312-amino-acid chain: Olfactory receptor 7D2 (312 aa).

Over 1–25 (MEAGNQTGFLEFILLGLSEDPELQP) the chain is Extracellular. N-linked (GlcNAc...) asparagine glycosylation is present at Asn5. Residues 26-46 (FIFGLFLSMYLVTVLGNLLII) form a helical membrane-spanning segment. The Cytoplasmic segment spans residues 47 to 54 (LAISSDSH). A helical transmembrane segment spans residues 55-75 (LHTPMYFFLSNLSWVDICFST). The Extracellular segment spans residues 76-99 (CIVPKMLVNIQTENKAISYMDCLT). An intrachain disulfide couples Cys97 to Cys189. The helical transmembrane segment at 100 to 120 (QVYFSMFFPILDTLLLTVMAY) threads the bilayer. Residues 121-139 (DRFVAVCHPLHYMIIMNPH) lie on the Cytoplasmic side of the membrane. The chain crosses the membrane as a helical span at residues 140-160 (LCGLLVFVTWLIGVMTSLLHI). The Extracellular portion of the chain corresponds to 161–197 (SLMMHLIFCKDFEIPHFFCELTYILQLACSDTFLNST). Residues 198–217 (LIYFMTGVLGVFPLLGIIFS) traverse the membrane as a helical segment. Over 218-237 (YSRIASSIRKMSSSGGKQKA) the chain is Cytoplasmic. The chain crosses the membrane as a helical span at residues 238–258 (LSTCGSHLSVVSLFYGTGIGV). Over 259–271 (HFTSAVTHSSQKI) the chain is Extracellular. The helical transmembrane segment at 272–292 (SVASVMYTVVTPMLNPFIYSL) threads the bilayer. At 293-312 (RNKDVKGALGSLLSRAASCL) the chain is on the cytoplasmic side.

It belongs to the G-protein coupled receptor 1 family.

The protein resides in the cell membrane. Its function is as follows. Odorant receptor. In Homo sapiens (Human), this protein is Olfactory receptor 7D2 (OR7D2).